Here is a 485-residue protein sequence, read N- to C-terminus: MATTNAQIYQQSQMPIPMPTPSLNPNINSAPTPGPNAMSVYEDCQSPLDTSVSGMYPGDRGSRVVSQPAPLLDQSHLRPGNQANLLSHDRTIELYRENAKKTNDPELIFEFSAFMIDAAKAMIPPEQEKDTNPSPALIKQMEKREEIIKEATSLLKRLADRGFPDAQYFLADCYANGIGTARGKQDFDRAFPLFILAAKHGHPDACYRAGTCCEHGWGCRRDSAKAVSFYKKAAVGLHPGAMYRLGTAELNGALGFPRRPKEGVKWLKRSAEHATEEFPHALHELALLHERGIENVVFVDNDYAAELLAQSAELGYAPSAFKLGECYEYGKMGCPVDPALSIHYYNISAQQDHKDACFALTAWYLVGSPGVLPQSDTEAYLWAKKAAELGLAKAQYAVGYFTETGIGIEANPQAALTWYKQAAEGGDKRAAKRLATGSRSSALDRRLEMEALKEEKRLGAANLAQRSGSGSGASGKDGKDGCLIM.

Sel1-like repeat units lie at residues 164 to 202 (PDAQYFLADCYANGIGTARGKQDFDRAFPLFILAAKHGH), 203 to 238 (PDACYRAGTCCEHGWGCRRDSAKAVSFYKKAAVGLH), 239 to 275 (PGAMYRLGTAELNGALGFPRRPKEGVKWLKRSAEHAT), 279 to 316 (PHALHELALLHERGIENVVFVDNDYAAELLAQSAELGY), 317 to 353 (APSAFKLGECYEYGKMGCPVDPALSIHYYNISAQQDH), 354 to 391 (KDACFALTAWYLVGSPGVLPQSDTEAYLWAKKAAELGL), and 392 to 427 (AKAQYAVGYFTETGIGIEANPQAALTWYKQAAEGGD). The segment at 460–485 (AANLAQRSGSGSGASGKDGKDGCLIM) is disordered. A compositionally biased stretch (basic and acidic residues) spans 476–485 (KDGKDGCLIM). Cys482 carries the post-translational modification Cysteine methyl ester. The S-farnesyl cysteine moiety is linked to residue Cys482. A propeptide spans 483 to 485 (LIM) (removed in mature form).

The protein belongs to the SKT5 family.

It is found in the cell membrane. Its function is as follows. Activator of the chitin synthase CHS3 which polymerizes chitin, a structural polymer of the fungal cell wall. Chitin produced by CHS3 is deacetylated to chitosan, which helps to maintain cell wall integrity, anchor melanin, and offers an advantage during infection, as chitosan is less readily detected by host immunosurveillance. The chain is Chitin synthase regulator 2 from Cryptococcus neoformans var. grubii serotype A (strain H99 / ATCC 208821 / CBS 10515 / FGSC 9487) (Filobasidiella neoformans var. grubii).